A 393-amino-acid chain; its full sequence is tRNA(Met) cytidine acetate ligase (393 aa).

Residues Gly-81, Asn-142, and Arg-167 each coordinate ATP.

Belongs to the TmcAL family.

The protein localises to the cytoplasm. The catalysed reaction is cytidine(34) in elongator tRNA(Met) + acetate + ATP = N(4)-acetylcytidine(34) in elongator tRNA(Met) + AMP + diphosphate. Catalyzes the formation of N(4)-acetylcytidine (ac(4)C) at the wobble position of elongator tRNA(Met), using acetate and ATP as substrates. First activates an acetate ion to form acetyladenylate (Ac-AMP) and then transfers the acetyl group to tRNA to form ac(4)C34. The protein is tRNA(Met) cytidine acetate ligase of Bacillus cytotoxicus (strain DSM 22905 / CIP 110041 / 391-98 / NVH 391-98).